The chain runs to 293 residues: Formamidopyrimidine-DNA glycosylase (293 aa).

Residue proline 2 is the Schiff-base intermediate with DNA of the active site. Catalysis depends on glutamate 3, which acts as the Proton donor. Lysine 60 acts as the Proton donor; for beta-elimination activity in catalysis. Residues histidine 110, arginine 129, and arginine 174 each contribute to the DNA site. The segment at 259–293 (NVYRRTGKECRKCGNLIEKQKIAGRSTHWCPNCQK) adopts an FPG-type zinc-finger fold. Arginine 283 serves as the catalytic Proton donor; for delta-elimination activity.

The protein belongs to the FPG family. As to quaternary structure, monomer. Requires Zn(2+) as cofactor.

The catalysed reaction is Hydrolysis of DNA containing ring-opened 7-methylguanine residues, releasing 2,6-diamino-4-hydroxy-5-(N-methyl)formamidopyrimidine.. The enzyme catalyses 2'-deoxyribonucleotide-(2'-deoxyribose 5'-phosphate)-2'-deoxyribonucleotide-DNA = a 3'-end 2'-deoxyribonucleotide-(2,3-dehydro-2,3-deoxyribose 5'-phosphate)-DNA + a 5'-end 5'-phospho-2'-deoxyribonucleoside-DNA + H(+). In terms of biological role, involved in base excision repair of DNA damaged by oxidation or by mutagenic agents. Acts as a DNA glycosylase that recognizes and removes damaged bases. Has a preference for oxidized purines, such as 7,8-dihydro-8-oxoguanine (8-oxoG). Has AP (apurinic/apyrimidinic) lyase activity and introduces nicks in the DNA strand. Cleaves the DNA backbone by beta-delta elimination to generate a single-strand break at the site of the removed base with both 3'- and 5'-phosphates. The chain is Formamidopyrimidine-DNA glycosylase from Prochlorococcus marinus (strain MIT 9312).